Reading from the N-terminus, the 301-residue chain is Polyamine aminopropyltransferase (301 aa).

The 237-residue stretch at 4-240 (WHWLLEWQTP…GLWGFVYGGV (237 aa)) folds into the PABS domain. Residue glutamine 33 participates in S-methyl-5'-thioadenosine binding. Spermidine is bound by residues histidine 64 and glutamate 89. Residues aspartate 109 and 141-142 (DG) each bind S-methyl-5'-thioadenosine. The active-site Proton acceptor is the aspartate 159.

It belongs to the spermidine/spermine synthase family. In terms of assembly, homodimer or homotetramer.

It localises to the cytoplasm. The enzyme catalyses S-adenosyl 3-(methylsulfanyl)propylamine + putrescine = S-methyl-5'-thioadenosine + spermidine + H(+). Its pathway is amine and polyamine biosynthesis; spermidine biosynthesis; spermidine from putrescine: step 1/1. In terms of biological role, catalyzes the irreversible transfer of a propylamine group from the amino donor S-adenosylmethioninamine (decarboxy-AdoMet) to putrescine (1,4-diaminobutane) to yield spermidine. The protein is Polyamine aminopropyltransferase of Saccharolobus islandicus (strain Y.N.15.51 / Yellowstone #2) (Sulfolobus islandicus).